A 244-amino-acid chain; its full sequence is Probable transcriptional regulatory protein Xfasm12_1059 (244 aa).

This sequence belongs to the TACO1 family.

The protein resides in the cytoplasm. This is Probable transcriptional regulatory protein Xfasm12_1059 from Xylella fastidiosa (strain M12).